Here is a 393-residue protein sequence, read N- to C-terminus: Phosphoglycerate kinase (393 aa).

Substrate-binding positions include 22-24 (DFN), R37, 60-63 (HLGR), R119, and R152. Residues K202, G293, E324, and 350 to 353 (GGDS) contribute to the ATP site.

Belongs to the phosphoglycerate kinase family. In terms of assembly, monomer.

It localises to the cytoplasm. The enzyme catalyses (2R)-3-phosphoglycerate + ATP = (2R)-3-phospho-glyceroyl phosphate + ADP. The protein operates within carbohydrate degradation; glycolysis; pyruvate from D-glyceraldehyde 3-phosphate: step 2/5. This chain is Phosphoglycerate kinase, found in Borrelia garinii subsp. bavariensis (strain ATCC BAA-2496 / DSM 23469 / PBi) (Borreliella bavariensis).